Consider the following 214-residue polypeptide: Large ribosomal subunit protein uL16 (214 aa).

Arg-32 carries the post-translational modification Citrulline. Lys-175 is covalently cross-linked (Glycyl lysine isopeptide (Lys-Gly) (interchain with G-Cter in SUMO2)). Lys-188 is covalently cross-linked (Glycyl lysine isopeptide (Lys-Gly) (interchain with G-Cter in ubiquitin)).

Belongs to the universal ribosomal protein uL16 family. Component of the large ribosomal subunit. Mature ribosomes consist of a small (40S) and a large (60S) subunit. The 40S subunit contains about 33 different proteins and 1 molecule of RNA (18S). The 60S subunit contains about 49 different proteins and 3 molecules of RNA (28S, 5.8S and 5S). Post-translationally, citrullinated by PADI4. Ufmylated by UFL1.

Its subcellular location is the cytoplasm. Its function is as follows. Component of the large ribosomal subunit. Plays a role in the formation of actively translating ribosomes. May play a role in the embryonic brain development. The chain is Large ribosomal subunit protein uL16 from Pongo abelii (Sumatran orangutan).